The following is a 363-amino-acid chain: NADH-quinone oxidoreductase subunit H (363 aa).

The next 9 membrane-spanning stretches (helical) occupy residues 62-82 (GPMY…KLLF), 96-116 (FVIA…VVPF), 127-147 (VGLL…ILAG), 163-183 (AAQV…VMIA), 202-222 (FFDW…VSGV), 238-257 (EIVA…LFFL), 264-286 (ILVS…QGWV), 299-319 (KGGW…YIWF), and 339-359 (FIPL…YGVI).

Belongs to the complex I subunit 1 family. In terms of assembly, NDH-1 is composed of 14 different subunits. Subunits NuoA, H, J, K, L, M, N constitute the membrane sector of the complex.

It localises to the cell inner membrane. The enzyme catalyses a quinone + NADH + 5 H(+)(in) = a quinol + NAD(+) + 4 H(+)(out). NDH-1 shuttles electrons from NADH, via FMN and iron-sulfur (Fe-S) centers, to quinones in the respiratory chain. The immediate electron acceptor for the enzyme in this species is believed to be ubiquinone. Couples the redox reaction to proton translocation (for every two electrons transferred, four hydrogen ions are translocated across the cytoplasmic membrane), and thus conserves the redox energy in a proton gradient. This subunit may bind ubiquinone. This Xanthomonas axonopodis pv. citri (strain 306) protein is NADH-quinone oxidoreductase subunit H.